We begin with the raw amino-acid sequence, 2494 residues long: Nuclear receptor corepressor 1 (2494 aa).

Polar residues predominate over residues methionine 1–arginine 33. Disordered stretches follow at residues methionine 1–phenylalanine 38, leucine 53–aspartate 106, serine 134–lysine 170, and glutamine 198–glutamine 222. Basic and acidic residues predominate over residues proline 71–glycine 82. Polar residues predominate over residues tyrosine 83–glutamine 92. 3 stretches are compositionally biased toward basic and acidic residues: residues asparagine 93 to aspartate 106, serine 134 to threonine 148, and glutamate 204 to lysine 213. The segment at serine 154–aspartate 304 is interaction with tbl1xr1. The stretch at leucine 168–proline 208 forms a coiled coil. The SANT 1 domain maps to glutamine 427–asparagine 478. Disordered regions lie at residues proline 488–glycine 638, asparagine 671–lysine 913, arginine 981–aspartate 1007, glycine 1081–glycine 1124, isoleucine 1413–arginine 1434, methionine 1488–glutamate 1585, leucine 1745–isoleucine 1845, and glutamate 1912–lysine 1987. 2 stretches are compositionally biased toward basic and acidic residues: residues alanine 502–glutamate 525 and lysine 535–alanine 548. A coiled-coil region spans residues alanine 502–isoleucine 549. A compositionally biased stretch (low complexity) spans alanine 582 to proline 616. Residues valine 617–threonine 629 are compositionally biased toward pro residues. The SANT 2 domain maps to glutamate 622–asparagine 668. The segment covering glutamine 692–alanine 702 has biased composition (polar residues). A coiled-coil region spans residues serine 698–serine 726. Residues glutamine 703–glycine 722 are compositionally biased toward acidic residues. The span at alanine 723–alanine 741 shows a compositional bias: low complexity. The span at alanine 766–valine 779 shows a compositional bias: polar residues. Basic and acidic residues predominate over residues alanine 829–alanine 864. Polar residues-rich tracts occupy residues glutamate 881–cysteine 892, methionine 993–proline 1004, and alanine 1104–glycine 1124. Over residues methionine 1488–arginine 1504 the composition is skewed to basic and acidic residues. Polar residues predominate over residues threonine 1508–arginine 1519. The segment covering proline 1548 to alanine 1561 has biased composition (low complexity). Positions valine 1771–alanine 1810 form a coiled coil. The span at alanine 1773–leucine 1807 shows a compositional bias: basic and acidic residues. Over residues proline 1835–isoleucine 1845 the composition is skewed to polar residues. Residues valine 1914 to valine 1935 are compositionally biased toward basic and acidic residues. Residues glutamine 1953–proline 1972 are compositionally biased toward low complexity. Positions alanine 1978 to lysine 1987 are enriched in basic and acidic residues. A CORNR box 1 motif is present at residues isoleucine 2008–isoleucine 2012. Residues serine 2018 to histidine 2105 are disordered. Residues serine 2027–histidine 2036 are compositionally biased toward low complexity. Over residues histidine 2039–isoleucine 2048 the composition is skewed to basic and acidic residues. Residues arginine 2088–isoleucine 2102 show a composition bias toward polar residues. The short motif at isoleucine 2119–isoleucine 2123 is the CORNR box 2 element. Over residues glutamine 2135–proline 2177 the composition is skewed to polar residues. Positions glutamine 2135–proline 2216 are disordered. The span at valine 2186–glutamate 2205 shows a compositional bias: basic and acidic residues. The CORNR box 3 signature appears at leucine 2322–isoleucine 2326. Disordered stretches follow at residues glycine 2346–serine 2413 and methionine 2446–glutamate 2494. Residues histidine 2376–lysine 2390 are compositionally biased toward basic residues. Composition is skewed to polar residues over residues methionine 2446–arginine 2472 and glutamine 2485–glutamate 2494.

Belongs to the N-CoR nuclear receptor corepressors family. Forms a large corepressor complex that contains sin3a/b, histone deacetylases hdac1 and hdac2, rbbp4 and possibly rbbp7. Interacts with the thyroid receptor (TR, composed of rxra and thrb) and the retinoid acid receptor (RAR, composed of rxra and rara) in the absence of ligand. Interacts with tbl1xr1. Interacts with zbtb33/kaiso.

The protein localises to the nucleus. Functionally, mediates transcriptional repression by certain nuclear receptors. Participates in complexes which promote histone deacetylation and the formation of repressive chromatin structures which may impede access by the basal transcription machinery. In association with hdac3, may play a role in the regulation of the circadian clock. In Xenopus tropicalis (Western clawed frog), this protein is Nuclear receptor corepressor 1 (ncor1).